A 224-amino-acid polypeptide reads, in one-letter code: Thiamine-phosphate synthase (224 aa).

Residues 41 to 45 and aspartate 77 contribute to the 4-amino-2-methyl-5-(diphosphooxymethyl)pyrimidine site; that span reads QFRDK. Mg(2+) contacts are provided by aspartate 78 and aspartate 97. Serine 116 contributes to the 4-amino-2-methyl-5-(diphosphooxymethyl)pyrimidine binding site. Residue 143-145 participates in 2-[(2R,5Z)-2-carboxy-4-methylthiazol-5(2H)-ylidene]ethyl phosphate binding; it reads TNS. A 4-amino-2-methyl-5-(diphosphooxymethyl)pyrimidine-binding site is contributed by lysine 146. Residues glycine 174 and 194 to 195 each bind 2-[(2R,5Z)-2-carboxy-4-methylthiazol-5(2H)-ylidene]ethyl phosphate; that span reads IS.

The protein belongs to the thiamine-phosphate synthase family. The cofactor is Mg(2+).

It carries out the reaction 2-[(2R,5Z)-2-carboxy-4-methylthiazol-5(2H)-ylidene]ethyl phosphate + 4-amino-2-methyl-5-(diphosphooxymethyl)pyrimidine + 2 H(+) = thiamine phosphate + CO2 + diphosphate. The catalysed reaction is 2-(2-carboxy-4-methylthiazol-5-yl)ethyl phosphate + 4-amino-2-methyl-5-(diphosphooxymethyl)pyrimidine + 2 H(+) = thiamine phosphate + CO2 + diphosphate. It catalyses the reaction 4-methyl-5-(2-phosphooxyethyl)-thiazole + 4-amino-2-methyl-5-(diphosphooxymethyl)pyrimidine + H(+) = thiamine phosphate + diphosphate. It participates in cofactor biosynthesis; thiamine diphosphate biosynthesis; thiamine phosphate from 4-amino-2-methyl-5-diphosphomethylpyrimidine and 4-methyl-5-(2-phosphoethyl)-thiazole: step 1/1. Its function is as follows. Condenses 4-methyl-5-(beta-hydroxyethyl)thiazole monophosphate (THZ-P) and 2-methyl-4-amino-5-hydroxymethyl pyrimidine pyrophosphate (HMP-PP) to form thiamine monophosphate (TMP). The protein is Thiamine-phosphate synthase of Latilactobacillus sakei subsp. sakei (strain 23K) (Lactobacillus sakei subsp. sakei).